We begin with the raw amino-acid sequence, 65 residues long: Large ribosomal subunit protein bL35 (65 aa).

Basic residues predominate over residues 1-43 (MPKMKTRRGAAKRFAKTGSGKFKRRKQGLRHILTKKTAKRKSR). The tract at residues 1–49 (MPKMKTRRGAAKRFAKTGSGKFKRRKQGLRHILTKKTAKRKSRLGQSAT) is disordered.

Belongs to the bacterial ribosomal protein bL35 family.

This chain is Large ribosomal subunit protein bL35, found in Maridesulfovibrio salexigens (strain ATCC 14822 / DSM 2638 / NCIMB 8403 / VKM B-1763) (Desulfovibrio salexigens).